The primary structure comprises 352 residues: Photosystem II D2 protein (352 aa).

Residues 40-60 (CAYLALGGWLTGTTFVTSWYT) traverse the membrane as a helical segment. Position 117 (H117) interacts with chlorophyll a. A helical transmembrane segment spans residues 124–140 (GFMLRQFEIAQSVRLRP). Q129 and N142 together coordinate pheophytin a. A helical transmembrane segment spans residues 152–165 (VFVSVFLIYPLGQS). A chlorophyll a-binding site is contributed by H197. Residues 207–227 (AALLCAIHGATVENTLFEDGD) form a helical membrane-spanning segment. A plastoquinone-binding residues include H214 and F261. H214 is a binding site for Fe cation. H268 is a binding site for Fe cation. Residues 278–294 (GLWMSALGVVGLALNLR) form a helical membrane-spanning segment.

It belongs to the reaction center PufL/M/PsbA/D family. In terms of assembly, PSII is composed of 1 copy each of membrane proteins PsbA, PsbB, PsbC, PsbD, PsbE, PsbF, PsbH, PsbI, PsbJ, PsbK, PsbL, PsbM, PsbT, PsbY, PsbZ, Psb30/Ycf12, at least 3 peripheral proteins of the oxygen-evolving complex and a large number of cofactors. It forms dimeric complexes. The D1/D2 heterodimer binds P680, chlorophylls that are the primary electron donor of PSII, and subsequent electron acceptors. It shares a non-heme iron and each subunit binds pheophytin, quinone, additional chlorophylls, carotenoids and lipids. There is also a Cl(-1) ion associated with D1 and D2, which is required for oxygen evolution. The PSII complex binds additional chlorophylls, carotenoids and specific lipids. is required as a cofactor.

Its subcellular location is the plastid. It localises to the chloroplast thylakoid membrane. The catalysed reaction is 2 a plastoquinone + 4 hnu + 2 H2O = 2 a plastoquinol + O2. Photosystem II (PSII) is a light-driven water:plastoquinone oxidoreductase that uses light energy to abstract electrons from H(2)O, generating O(2) and a proton gradient subsequently used for ATP formation. It consists of a core antenna complex that captures photons, and an electron transfer chain that converts photonic excitation into a charge separation. The D1/D2 (PsbA/PsbD) reaction center heterodimer binds P680, the primary electron donor of PSII as well as several subsequent electron acceptors. D2 is needed for assembly of a stable PSII complex. This is Photosystem II D2 protein from Bigelowiella natans (Pedinomonas minutissima).